A 521-amino-acid polypeptide reads, in one-letter code: Ribonuclease Y (521 aa).

The helical transmembrane segment at 3–23 (VSIWMLVITVLAAVAAYFAGS) threads the bilayer. One can recognise a KH domain in the interval 211-271 (TVSVVPLPSD…VRREVARMSL (61 aa)). The region spanning 337–430 (IYQHSLEVAF…VQAADALSGA (94 aa)) is the HD domain.

It belongs to the RNase Y family.

The protein localises to the cell membrane. Functionally, endoribonuclease that initiates mRNA decay. The chain is Ribonuclease Y from Pelobacter propionicus (strain DSM 2379 / NBRC 103807 / OttBd1).